Consider the following 195-residue polypeptide: MAWVLASTSPRRKELLAQAGFSHLDFSFQLVAPNIDETPLSTETAEQYVCRLALEKAQAGLALSSHVVKPQVLGSDTIVVLNGLILGKPIDQNDAKRMLALLSGQTHEVMTAVALTDGEHTFNRLCRTQVSFCELSAADIDAYVGSGEPMDKAGAYGIQALGGCFVKSITGSYSAVVGLPLVETRELLACMMQHT.

The active-site Proton acceptor is D76.

The protein belongs to the Maf family. YhdE subfamily. A divalent metal cation serves as cofactor.

Its subcellular location is the cytoplasm. The enzyme catalyses dTTP + H2O = dTMP + diphosphate + H(+). It catalyses the reaction UTP + H2O = UMP + diphosphate + H(+). Functionally, nucleoside triphosphate pyrophosphatase that hydrolyzes dTTP and UTP. May have a dual role in cell division arrest and in preventing the incorporation of modified nucleotides into cellular nucleic acids. The sequence is that of dTTP/UTP pyrophosphatase from Shewanella frigidimarina (strain NCIMB 400).